We begin with the raw amino-acid sequence, 189 residues long: FUN14 domain-containing protein 2 (189 aa).

Residues 1–80 (METSAPRAGS…GQESGPSAEK (80 aa)) lie on the Cytoplasmic side of the membrane. A phosphoserine mark is found at S10 and S53. Residues 81 to 101 (YSVATQLFIGGVTGWCTGFIF) traverse the membrane as a helical segment. Topologically, residues 102 to 107 (QKVGKL) are mitochondrial intermembrane. A helical membrane pass occupies residues 108-128 (AATAVGGGFFLLQLANHTGYI). At 129-164 (KVDWQRVEKDMKKAKEQLKIRKSNQIPTEVRSKAEE) the chain is on the cytoplasmic side. S151 is modified (phosphoserine). The chain crosses the membrane as a helical span at residues 165–185 (VVSFVKKNVLVTGGFFGGFLL). Residues 186-189 (GMAS) lie on the Mitochondrial intermembrane side of the membrane.

It belongs to the FUN14 family. In terms of tissue distribution, highly expressed in platelets (at protein level).

Its subcellular location is the mitochondrion outer membrane. The protein resides in the nucleus. Functionally, binds directly and specifically 1,2-Diacyl-sn-glycero-3-phospho-(1'-myo-inositol-3',4',5'-bisphosphate) (PIP3) leading to the recruitment of PIP3 to mitochondria and may play a role in the regulation of the platelet activation via AKT/GSK3B/cGMP signaling pathways. May act as transcription factor that regulates SREBP1 (isoform SREBP-1C) expression in order to modulate triglyceride (TG) homeostasis in hepatocytes. This Homo sapiens (Human) protein is FUN14 domain-containing protein 2.